The following is a 320-amino-acid chain: Holliday junction branch migration complex subunit RuvB (320 aa).

A large ATPase domain (RuvB-L) region spans residues methionine 1–tyrosine 172. Residues arginine 12, glycine 53, lysine 56, threonine 57, threonine 58, glutamate 119–phenylalanine 121, arginine 162, tyrosine 172, and arginine 209 each bind ATP. A Mg(2+)-binding site is contributed by threonine 57. Residues threonine 173–glutamate 243 form a small ATPAse domain (RuvB-S) region. Residues glutamate 246–glycine 320 form a head domain (RuvB-H) region. 2 residues coordinate DNA: arginine 301 and arginine 306.

This sequence belongs to the RuvB family. In terms of assembly, homohexamer. Forms an RuvA(8)-RuvB(12)-Holliday junction (HJ) complex. HJ DNA is sandwiched between 2 RuvA tetramers; dsDNA enters through RuvA and exits via RuvB. An RuvB hexamer assembles on each DNA strand where it exits the tetramer. Each RuvB hexamer is contacted by two RuvA subunits (via domain III) on 2 adjacent RuvB subunits; this complex drives branch migration. In the full resolvosome a probable DNA-RuvA(4)-RuvB(12)-RuvC(2) complex forms which resolves the HJ.

The protein resides in the cytoplasm. The catalysed reaction is ATP + H2O = ADP + phosphate + H(+). In terms of biological role, the RuvA-RuvB-RuvC complex processes Holliday junction (HJ) DNA during genetic recombination and DNA repair, while the RuvA-RuvB complex plays an important role in the rescue of blocked DNA replication forks via replication fork reversal (RFR). RuvA specifically binds to HJ cruciform DNA, conferring on it an open structure. The RuvB hexamer acts as an ATP-dependent pump, pulling dsDNA into and through the RuvAB complex. RuvB forms 2 homohexamers on either side of HJ DNA bound by 1 or 2 RuvA tetramers; 4 subunits per hexamer contact DNA at a time. Coordinated motions by a converter formed by DNA-disengaged RuvB subunits stimulates ATP hydrolysis and nucleotide exchange. Immobilization of the converter enables RuvB to convert the ATP-contained energy into a lever motion, pulling 2 nucleotides of DNA out of the RuvA tetramer per ATP hydrolyzed, thus driving DNA branch migration. The RuvB motors rotate together with the DNA substrate, which together with the progressing nucleotide cycle form the mechanistic basis for DNA recombination by continuous HJ branch migration. Branch migration allows RuvC to scan DNA until it finds its consensus sequence, where it cleaves and resolves cruciform DNA. The sequence is that of Holliday junction branch migration complex subunit RuvB from Nitratidesulfovibrio vulgaris (strain ATCC 29579 / DSM 644 / CCUG 34227 / NCIMB 8303 / VKM B-1760 / Hildenborough) (Desulfovibrio vulgaris).